Consider the following 154-residue polypeptide: 3-hydroxyacyl-[acyl-carrier-protein] dehydratase FabZ (154 aa).

His54 is an active-site residue.

Belongs to the thioester dehydratase family. FabZ subfamily.

It is found in the cytoplasm. It carries out the reaction a (3R)-hydroxyacyl-[ACP] = a (2E)-enoyl-[ACP] + H2O. Functionally, involved in unsaturated fatty acids biosynthesis. Catalyzes the dehydration of short chain beta-hydroxyacyl-ACPs and long chain saturated and unsaturated beta-hydroxyacyl-ACPs. This is 3-hydroxyacyl-[acyl-carrier-protein] dehydratase FabZ from Shewanella baltica (strain OS223).